A 249-amino-acid chain; its full sequence is Probable phosphatase VVA0289 (249 aa).

Zn(2+)-binding residues include His8, His10, His16, His41, Glu74, His102, His132, Asp194, and His196.

It belongs to the PHP family. It depends on Zn(2+) as a cofactor.

The polypeptide is Probable phosphatase VVA0289 (Vibrio vulnificus (strain YJ016)).